A 371-amino-acid polypeptide reads, in one-letter code: 3-isopropylmalate dehydrogenase (371 aa).

Residues arginine 104, arginine 114, arginine 142, and aspartate 232 each contribute to the substrate site. Mg(2+) is bound by residues aspartate 232, aspartate 256, and aspartate 260. Position 290 to 302 (glycine 290 to asparagine 302) interacts with NAD(+).

This sequence belongs to the isocitrate and isopropylmalate dehydrogenases family. LeuB type 1 subfamily. Homodimer. Requires Mg(2+) as cofactor. Mn(2+) is required as a cofactor.

The protein resides in the cytoplasm. It catalyses the reaction (2R,3S)-3-isopropylmalate + NAD(+) = 4-methyl-2-oxopentanoate + CO2 + NADH. It functions in the pathway amino-acid biosynthesis; L-leucine biosynthesis; L-leucine from 3-methyl-2-oxobutanoate: step 3/4. Catalyzes the oxidation of 3-carboxy-2-hydroxy-4-methylpentanoate (3-isopropylmalate) to 3-carboxy-4-methyl-2-oxopentanoate. The product decarboxylates to 4-methyl-2 oxopentanoate. This Synechococcus sp. (strain JA-2-3B'a(2-13)) (Cyanobacteria bacterium Yellowstone B-Prime) protein is 3-isopropylmalate dehydrogenase.